The sequence spans 579 residues: F-box protein At5g39450 (579 aa).

The 47-residue stretch at 16-62 (TCLLLSLPEDVIAVIARFVSPRDICNLSLCCKSLCDVVDSERIWLVQ) folds into the F-box domain.

The sequence is that of F-box protein At5g39450 from Arabidopsis thaliana (Mouse-ear cress).